Consider the following 94-residue polypeptide: Lipolysis-activating peptide 1-beta chain (94 aa).

Positions 1-19 (MKILAVVLISVIVLNTANG) are cleaved as a signal peptide. Residues 20–87 (ENYYPQKYTN…FFNALESQCP (68 aa)) enclose the LCN-type CS-alpha/beta domain. Intrachain disulfides connect cysteine 34–cysteine 56, cysteine 42–cysteine 66, and cysteine 46–cysteine 68.

This sequence belongs to the long (3 C-C) scorpion toxin superfamily. As to quaternary structure, homodimer; disulfide-linked or monomer (edited version) or heterodimer of an alpha chain (AC D9U299 or AC D9U2A4) and this beta chain (non-edited version). Expressed by the venom gland.

The protein localises to the secreted. Functionally, the homodimer inhibits HMG-CoA reductase (HMGCR) (32% of inhibition produced by 0.6 uM), a glycoprotein involved in the control of cholesterol biosynthesis. The inhibitory effects of bumarsin are seen at much lower concentrations (0.6 uM) than that for statins such as atorvastatin (5 mM) and simvastatin (10 uM). In addition to inhibition of HMG-CoA reductase, this protein lowers cholesterol levels by inducing steroid hormone synthesis via StAR, and by increasing reverse cholesterol transport mediated by the induction of ABCA1 and APOA1. Its function is as follows. The heterodimer non-edited LVP1 induces lipolysis in rat adipocytes. Induction of lipolysis by LVP1 appears to be mediated through the beta-2 adrenergic receptor pathway (ADRB2). In terms of biological role, the monomer edited version, similar to alpha-toxins, may modulate voltage-gated sodium channels (Nav) and may block voltage-gated potassium channels (Kv). The protein is Lipolysis-activating peptide 1-beta chain of Lychas mucronatus (Chinese swimming scorpion).